Reading from the N-terminus, the 148-residue chain is Large ribosomal subunit protein bL9 (148 aa).

It belongs to the bacterial ribosomal protein bL9 family.

In terms of biological role, binds to the 23S rRNA. The polypeptide is Large ribosomal subunit protein bL9 (Pseudomonas fluorescens (strain ATCC BAA-477 / NRRL B-23932 / Pf-5)).